Reading from the N-terminus, the 398-residue chain is Proteasome-activating nucleotidase (398 aa).

A coiled-coil region spans residues 18–59 (IMYLKKRIRQLELQVRTLEADKERLERELSRLRMEMSRLRQP). Residues 183-188 (GCGKTL) and His-322 contribute to the ATP site. Residues 396–398 (MYG) are docks into pockets in the proteasome alpha-ring to cause gate opening.

This sequence belongs to the AAA ATPase family. As to quaternary structure, homohexamer. The hexameric complex has a two-ring architecture resembling a top hat that caps the 20S proteasome core at one or both ends. Upon ATP-binding, the C-terminus of PAN interacts with the alpha-rings of the proteasome core by binding to the intersubunit pockets.

The protein resides in the cytoplasm. Functionally, ATPase which is responsible for recognizing, binding, unfolding and translocation of substrate proteins into the archaeal 20S proteasome core particle. Is essential for opening the gate of the 20S proteasome via an interaction with its C-terminus, thereby allowing substrate entry and access to the site of proteolysis. Thus, the C-termini of the proteasomal ATPase function like a 'key in a lock' to induce gate opening and therefore regulate proteolysis. Unfolding activity requires energy from ATP hydrolysis, whereas ATP binding alone promotes ATPase-20S proteasome association which triggers gate opening, and supports translocation of unfolded substrates. This Thermococcus onnurineus (strain NA1) protein is Proteasome-activating nucleotidase.